The chain runs to 182 residues: U1 small nuclear ribonucleoprotein C (182 aa).

The segment at 4 to 36 (YLCDYCQVWLTHDSQSVRKAHNAGRAHIQNVQD) adopts a Matrin-type zinc-finger fold. Residues 129–182 (PQTTASSNTQLTQQQQSLPQTNEHQRARTHSNANNHFTKTHHQGQRSHQRFVRA) are disordered. A compositionally biased stretch (low complexity) spans 130–150 (QTTASSNTQLTQQQQSLPQTN). The segment covering 166-182 (TKTHHQGQRSHQRFVRA) has biased composition (basic residues).

This sequence belongs to the U1 small nuclear ribonucleoprotein C family. In terms of assembly, U1 snRNP is composed of the 7 core Sm proteins smb1, smd1, smd2, smd3, sme1, smf1 and smg1 (Sm proteins B, D1, D2, D3, E, F and G, respectively) that assemble in a heptameric protein ring on the Sm site of the small nuclear RNA to form the core snRNP, and at least 9 U1 snRNP-specific proteins usp101/U1-70K, usp102/U1-A, usp103/U1-C, usp106/LUC7, usp105/PRP39, usp104/PRP40, usp107/U1-H, usp108/U1-J and usp109/U1-L. usp103/U1-C interacts with U1 snRNA and the 5' splice-site region of the pre-mRNA.

It localises to the nucleus. Functionally, component of the spliceosomal U1 snRNP, which is essential for recognition of the pre-mRNA 5' splice-site and the subsequent assembly of the spliceosome. usp103/U1-C is directly involved in initial 5' splice-site recognition for both constitutive and regulated alternative splicing. The interaction with the 5' splice-site seems to precede base-pairing between the pre-mRNA and the U1 snRNA. Stimulates commitment or early (E) complex formation by stabilizing the base pairing of the 5' end of the U1 snRNA and the 5' splice-site region. The protein is U1 small nuclear ribonucleoprotein C (usp103) of Schizosaccharomyces pombe (strain 972 / ATCC 24843) (Fission yeast).